We begin with the raw amino-acid sequence, 179 residues long: Orotate phosphoribosyltransferase (179 aa).

5-phospho-alpha-D-ribose 1-diphosphate contacts are provided by residues Arg24, Arg89, Lys90, Lys93, and 115–123; that span reads EDVITTGGA. Orotate-binding residues include Thr119 and Arg147.

It belongs to the purine/pyrimidine phosphoribosyltransferase family. PyrE subfamily. In terms of assembly, homodimer. Mg(2+) serves as cofactor.

It catalyses the reaction orotidine 5'-phosphate + diphosphate = orotate + 5-phospho-alpha-D-ribose 1-diphosphate. The protein operates within pyrimidine metabolism; UMP biosynthesis via de novo pathway; UMP from orotate: step 1/2. Catalyzes the transfer of a ribosyl phosphate group from 5-phosphoribose 1-diphosphate to orotate, leading to the formation of orotidine monophosphate (OMP). The sequence is that of Orotate phosphoribosyltransferase from Nocardioides sp. (strain ATCC BAA-499 / JS614).